We begin with the raw amino-acid sequence, 80 residues long: UPF0154 protein SH1564 (80 aa).

A helical transmembrane segment spans residues 4 to 24 (WLAILLIIVALIGGLVGGFFL).

It belongs to the UPF0154 family.

It is found in the membrane. This is UPF0154 protein SH1564 from Staphylococcus haemolyticus (strain JCSC1435).